Here is a 411-residue protein sequence, read N- to C-terminus: Putative nickel insertion protein (411 aa).

This sequence belongs to the LarC family.

In Acaryochloris marina (strain MBIC 11017), this protein is Putative nickel insertion protein.